Consider the following 211-residue polypeptide: Probable nicotinate-nucleotide adenylyltransferase (211 aa).

It belongs to the NadD family.

The enzyme catalyses nicotinate beta-D-ribonucleotide + ATP + H(+) = deamido-NAD(+) + diphosphate. It participates in cofactor biosynthesis; NAD(+) biosynthesis; deamido-NAD(+) from nicotinate D-ribonucleotide: step 1/1. In terms of biological role, catalyzes the reversible adenylation of nicotinate mononucleotide (NaMN) to nicotinic acid adenine dinucleotide (NaAD). The polypeptide is Probable nicotinate-nucleotide adenylyltransferase (Desulfotalea psychrophila (strain LSv54 / DSM 12343)).